Reading from the N-terminus, the 212-residue chain is Outer surface protein C (212 aa).

The first 18 residues, 1 to 18 (MKKNTLSAILMTLFLFIS), serve as a signal peptide directing secretion. A lipid anchor (N-palmitoyl cysteine) is attached at Cys19. Cys19 carries the S-diacylglycerol cysteine lipid modification.

Belongs to the OspC lipoprotein family. Homodimer. Interacts with tick Ixodes ricinus salivary protein Iric-1. Binds human (host) plasminogen. The N-terminus is blocked.

It is found in the cell outer membrane. It localises to the cell surface. Functionally, major immunodominant protein in mammalian hosts. Required for initial stages of mammalian infection. Inhibits macrophage-mediated phagocytosis of the bacteria. Binds human plasminogen; this probably confers an extracellular protease activity on the bacteria that allows it to traverse tissue. Unlike closely related strain B31, its interaction with Ixodes ricinus salivary protein Iric-1 does not protect against antibody-mediated destruction in vitro. In Borreliella afzelii (strain PKo) (Borrelia afzelii), this protein is Outer surface protein C.